The following is a 305-amino-acid chain: GMP synthase [glutamine-hydrolyzing] subunit B (305 aa).

In terms of domain architecture, GMPS ATP-PPase spans 2-185; that stretch reads VNVDEFIEEA…LDLEEIISER (184 aa). 29-35 provides a ligand contact to ATP; sequence SGGVDSS.

As to quaternary structure, heterodimer composed of a glutamine amidotransferase subunit (A) and a GMP-binding subunit (B).

It carries out the reaction XMP + L-glutamine + ATP + H2O = GMP + L-glutamate + AMP + diphosphate + 2 H(+). It functions in the pathway purine metabolism; GMP biosynthesis; GMP from XMP (L-Gln route): step 1/1. Catalyzes the synthesis of GMP from XMP. In Haloarcula marismortui (strain ATCC 43049 / DSM 3752 / JCM 8966 / VKM B-1809) (Halobacterium marismortui), this protein is GMP synthase [glutamine-hydrolyzing] subunit B.